The following is a 327-amino-acid chain: MNNEQRGVALLIVLMLLALMAALAADMTLSFHSQLQRTRQVNHHLQRQYDIELAEKLALASLTQDVKDNDRQTTLQQYWAQPQQLQLEDGNTVKWQLRDAQHCFNLNALAKISDDPLASPDFPAQVFSALLINAGIDRGNTDEIVQSIADYIDVDDSPRFHGAEDSFYQSQTPPRHSANQMLFLTGELRQIKGITENIYQRLIPYVCVLPTTELSINLNMLTENDIPLFRALFLNNITDADARVLLQKRPREGWLTTDAFLYWAQQDFSGVKPLVAQVKRHLFPYSRYFTLSTESISDEQSQGWQSHIFFNRKQQSAQIYRRTLQLY.

The propeptide at Met-1–Gly-7 is leader sequence. Residues Gly-7–Met-27 form a helical membrane-spanning segment. The Periplasmic segment spans residues Thr-28 to Tyr-327.

This sequence belongs to the GSP K family. In terms of assembly, type II secretion is composed of four main components: the outer membrane complex, the inner membrane complex, the cytoplasmic secretion ATPase and the periplasm-spanning pseudopilus. Interacts with core component GspG. Cleaved by prepilin peptidase.

Its subcellular location is the cell inner membrane. Component of the type II secretion system required for the energy-dependent secretion of extracellular factors such as proteases and toxins from the periplasm. Plays a role in pseudopilus assembly and seems to control its length. Interacts with the pseudopilus tip complex that is critical for the recognition and binding of secretion substrates. The chain is Putative type II secretion system protein K (gspK) from Escherichia coli (strain K12).